The following is a 396-amino-acid chain: Flavohemoprotein (396 aa).

Residues 1–136 form the Globin domain; sequence MLDAQTIATV…LANVFIHREA (136 aa). Histidine 85 is a heme b binding site. Residues tyrosine 95 and glutamate 135 each act as charge relay system in the active site. The interval 147–396 is reductase; it reads GGWEGTRPFR…YECFGPHKVL (250 aa). An FAD-binding FR-type domain is found at 150–255; it reads EGTRPFRIVA…AAPAGDFFMN (106 aa). FAD is bound by residues tyrosine 188 and 204–207; that span reads RQYS. 268-273 is a binding site for NADP(+); that stretch reads GVGQTP. 389–392 provides a ligand contact to FAD; sequence CFGP.

This sequence belongs to the globin family. Two-domain flavohemoproteins subfamily. In the C-terminal section; belongs to the flavoprotein pyridine nucleotide cytochrome reductase family. Monomer. It depends on heme b as a cofactor. Requires FAD as cofactor.

The enzyme catalyses 2 nitric oxide + NADPH + 2 O2 = 2 nitrate + NADP(+) + H(+). The catalysed reaction is 2 nitric oxide + NADH + 2 O2 = 2 nitrate + NAD(+) + H(+). In terms of biological role, is involved in NO detoxification in an aerobic process, termed nitric oxide dioxygenase (NOD) reaction that utilizes O(2) and NAD(P)H to convert NO to nitrate, which protects the bacterium from various noxious nitrogen compounds. Therefore, plays a central role in the inducible response to nitrosative stress. The chain is Flavohemoprotein (hmp) from Salmonella typhimurium (strain LT2 / SGSC1412 / ATCC 700720).